Reading from the N-terminus, the 312-residue chain is Aquaglyceroporin-2 (312 aa).

6 consecutive transmembrane segments (helical) span residues 78–98, 104–124, 151–171, 203–223, 239–259, and 286–306; these read FLGN…SLLV, LGLT…SLGI, YIAA…GVFA, GIFY…LCVC, VAIG…SPLA, and YYFW…LFLY.

It belongs to the MIP/aquaporin (TC 1.A.8) family.

Its subcellular location is the membrane. The enzyme catalyses glycerol(in) = glycerol(out). It catalyses the reaction H2O(in) = H2O(out). It carries out the reaction urea(in) = urea(out). Its function is as follows. Mediates water and glycerol transport across cell membranes. Permeable to urea. Permeable to methylamine/methylammonium. Permeable to dihydroxyacetone. The protein is Aquaglyceroporin-2 of Trypanosoma brucei brucei.